Consider the following 320-residue polypeptide: Protein PXR1 (320 aa).

Residues 1-11 (MGLAGPRKRTK) are compositionally biased toward basic residues. The tract at residues 1–24 (MGLAGPRKRTKISHDPNNTAWSRS) is disordered. Positions 15-24 (DPNNTAWSRS) are enriched in polar residues. Positions 25-79 (TSGYGHKIMSAQGWTPGSFLGASNAAHADHFTAGSAGHIRVILKDDNLGLGAKLR) constitute a G-patch domain. The disordered stretch occupies residues 152–298 (GEEVQTPQIS…MGRQFTRGRH (147 aa)). Residues 169-182 (KRPKKARKKEKRRA) show a composition bias toward basic residues. Composition is skewed to basic and acidic residues over residues 203–214 (RKENKEKKKSSD), 243–256 (KDPEPSNTEVHDDS), and 269–288 (QESRYSAKNESIRKIREHRP).

This sequence belongs to the PINX1 family.

It localises to the nucleus. The protein localises to the nucleolus. In terms of biological role, involved in rRNA-processing at A0, A1 and A2 sites and negatively regulates telomerase. This is Protein PXR1 (PXR1) from Ajellomyces capsulatus (strain NAm1 / WU24) (Darling's disease fungus).